We begin with the raw amino-acid sequence, 264 residues long: Glutamate racemase (264 aa).

Residues 12–13 and 44–45 contribute to the substrate site; these read DS and YG. Cysteine 75 acts as the Proton donor/acceptor in catalysis. A substrate-binding site is contributed by 76 to 77; sequence NT. The Proton donor/acceptor role is filled by cysteine 186. 187–188 serves as a coordination point for substrate; that stretch reads TH.

The protein belongs to the aspartate/glutamate racemases family.

The enzyme catalyses L-glutamate = D-glutamate. It functions in the pathway cell wall biogenesis; peptidoglycan biosynthesis. In terms of biological role, provides the (R)-glutamate required for cell wall biosynthesis. The chain is Glutamate racemase from Stutzerimonas stutzeri (strain A1501) (Pseudomonas stutzeri).